The following is a 318-amino-acid chain: NADH-ubiquinone oxidoreductase chain 1 (318 aa).

A run of 8 helical transmembrane segments spans residues 2–22, 70–90, 98–118, 140–160, 173–193, 217–237, 253–273, and 294–314; these read FTIN…FLTL, LYMA…TPLP, FNLG…SILW, ISYG…SGSF, WLLL…LAET, AGSF…MNAL, ELYT…FLWI, and LPLT…LSGI.

This sequence belongs to the complex I subunit 1 family.

Its subcellular location is the mitochondrion inner membrane. The catalysed reaction is a ubiquinone + NADH + 5 H(+)(in) = a ubiquinol + NAD(+) + 4 H(+)(out). In terms of biological role, core subunit of the mitochondrial membrane respiratory chain NADH dehydrogenase (Complex I) that is believed to belong to the minimal assembly required for catalysis. Complex I functions in the transfer of electrons from NADH to the respiratory chain. The immediate electron acceptor for the enzyme is believed to be ubiquinone. The chain is NADH-ubiquinone oxidoreductase chain 1 (MT-ND1) from Sapajus apella (Brown-capped capuchin).